Consider the following 860-residue polypeptide: Leucine--tRNA ligase (860 aa).

The 'HIGH' region motif lies at 42–52 (PYPSGRLHMGH). The short motif at 619–623 (KMSKS) is the 'KMSKS' region element. Position 622 (Lys622) interacts with ATP.

Belongs to the class-I aminoacyl-tRNA synthetase family.

Its subcellular location is the cytoplasm. The enzyme catalyses tRNA(Leu) + L-leucine + ATP = L-leucyl-tRNA(Leu) + AMP + diphosphate. In Erwinia tasmaniensis (strain DSM 17950 / CFBP 7177 / CIP 109463 / NCPPB 4357 / Et1/99), this protein is Leucine--tRNA ligase.